The primary structure comprises 261 residues: tRNA pseudouridine synthase A (261 aa).

Asp51 functions as the Nucleophile in the catalytic mechanism. Tyr109 lines the substrate pocket.

The protein belongs to the tRNA pseudouridine synthase TruA family. Homodimer.

The enzyme catalyses uridine(38/39/40) in tRNA = pseudouridine(38/39/40) in tRNA. Functionally, formation of pseudouridine at positions 38, 39 and 40 in the anticodon stem and loop of transfer RNAs. This chain is tRNA pseudouridine synthase A, found in Idiomarina loihiensis (strain ATCC BAA-735 / DSM 15497 / L2-TR).